The chain runs to 121 residues: Basic phospholipase A2 BmTX-I (121 aa).

7 disulfides stabilise this stretch: cysteine 26/cysteine 114, cysteine 28/cysteine 45, cysteine 44/cysteine 95, cysteine 50/cysteine 121, cysteine 51/cysteine 88, cysteine 58/cysteine 82, and cysteine 76/cysteine 86. Residues tyrosine 27, glycine 29, and glycine 31 each coordinate Ca(2+). The active site involves histidine 48. Aspartate 49 serves as a coordination point for Ca(2+). Aspartate 89 is a catalytic residue.

It depends on Ca(2+) as a cofactor. Expressed by the venom gland.

The protein resides in the secreted. The enzyme catalyses a 1,2-diacyl-sn-glycero-3-phosphocholine + H2O = a 1-acyl-sn-glycero-3-phosphocholine + a fatty acid + H(+). With respect to regulation, inhibited by magnesium, cadmium and manganese ions. Also inhibited by crotapotin. In terms of biological role, snake venom phospholipase A2 (PLA2) that shows enzymatic activity in the presence of a synthetic substrate. In vitro, blocks the neuromuscular transmission in young chick biventer cervicis preparations. In mice, induces myonecrosis and a systemic interleukin-6 response upon intramuscular injection. Also induces edema and exerts a strong pro-inflammatory effect. PLA2 catalyzes the calcium-dependent hydrolysis of the 2-acyl groups in 3-sn-phosphoglycerides. The polypeptide is Basic phospholipase A2 BmTX-I (Bothrops moojeni (Lance-headed viper)).